The primary structure comprises 452 residues: Solute carrier family 52, riboflavin transporter, member 3-B (452 aa).

5 consecutive transmembrane segments (helical) span residues 11–31 (LFGI…PLIV), 38–58 (WLLP…PLFI), 73–93 (PVIY…AFLW), 111–131 (LSFL…PFMM), and 138–158 (LTTY…VALV). N168, N174, N179, and N193 each carry an N-linked (GlcNAc...) asparagine glycan. 6 consecutive transmembrane segments (helical) span residues 199–219 (FFLF…LLNL), 285–305 (VFIF…LPSV), 321–341 (AATL…FVPI), 344–364 (LVLM…IMAM), 381–401 (ALIV…KVII), and 412–432 (ALVW…LSMF).

It belongs to the riboflavin transporter family.

The protein localises to the cell membrane. It carries out the reaction riboflavin(in) = riboflavin(out). Plasma membrane transporter mediating the uptake by cells of the water soluble vitamin B2/riboflavin that plays a key role in biochemical oxidation-reduction reactions of the carbohydrate, lipid, and amino acid metabolism. This is Solute carrier family 52, riboflavin transporter, member 3-B (slc52a3b) from Danio rerio (Zebrafish).